A 252-amino-acid polypeptide reads, in one-letter code: NAD-dependent protein deacetylase (252 aa).

The Deacetylase sirtuin-type domain maps to 2–243; that stretch reads DSKRDEKILE…DRVVKELKKI (242 aa). 8 residues coordinate NAD(+): A28, T32, F39, R40, Q109, I111, D112, and H127. F39 is a binding site for nicotinamide. Residues I111 and D112 each contribute to the nicotinamide site. Residue H127 is the Proton acceptor of the active site. 4 residues coordinate Zn(2+): C135, C138, C148, and C150. Residues T188, S189, and N211 each contribute to the NAD(+) site.

It belongs to the sirtuin family. Class U subfamily. It depends on Zn(2+) as a cofactor.

It is found in the cytoplasm. The catalysed reaction is N(6)-acetyl-L-lysyl-[protein] + NAD(+) + H2O = 2''-O-acetyl-ADP-D-ribose + nicotinamide + L-lysyl-[protein]. In terms of biological role, NAD-dependent protein deacetylase which modulates the activities of several enzymes which are inactive in their acetylated form. The protein is NAD-dependent protein deacetylase of Fusobacterium nucleatum subsp. nucleatum (strain ATCC 25586 / DSM 15643 / BCRC 10681 / CIP 101130 / JCM 8532 / KCTC 2640 / LMG 13131 / VPI 4355).